The primary structure comprises 81 residues: Large ribosomal subunit protein bL28 (81 aa).

It belongs to the bacterial ribosomal protein bL28 family. Part of the 50S ribosomal subunit.

The sequence is that of Large ribosomal subunit protein bL28 from Deinococcus radiodurans (strain ATCC 13939 / DSM 20539 / JCM 16871 / CCUG 27074 / LMG 4051 / NBRC 15346 / NCIMB 9279 / VKM B-1422 / R1).